Here is a 285-residue protein sequence, read N- to C-terminus: Probable endonuclease 4 (285 aa).

The Zn(2+) site is built by H68, H108, E145, D179, H182, H216, D229, H231, and E261.

It belongs to the AP endonuclease 2 family. The cofactor is Zn(2+).

It catalyses the reaction Endonucleolytic cleavage to 5'-phosphooligonucleotide end-products.. Functionally, endonuclease IV plays a role in DNA repair. It cleaves phosphodiester bonds at apurinic or apyrimidinic (AP) sites, generating a 3'-hydroxyl group and a 5'-terminal sugar phosphate. The chain is Probable endonuclease 4 from Geotalea daltonii (strain DSM 22248 / JCM 15807 / FRC-32) (Geobacter daltonii).